A 528-amino-acid chain; its full sequence is Proteinaceous RNase P 2 (528 aa).

Residues M1–S16 are compositionally biased toward basic and acidic residues. Residues M1–N28 form a disordered region. 4 PPR repeats span residues P29–L64, L72–P107, N108–S142, and R145–L179. A PRORP domain is found at V275–C511. Positions 281 and 284 each coordinate Zn(2+). The Mg(2+) site is built by D343, D421, D422, and D440. Zn(2+)-binding residues include H494 and C511.

It belongs to the PPR family. P subfamily. As to quaternary structure, monomer; forms dimers in crystallo but monomers in solution. Mg(2+) is required as a cofactor.

Its subcellular location is the nucleus. The catalysed reaction is Endonucleolytic cleavage of RNA, removing 5'-extranucleotides from tRNA precursor.. Endonuclease RNase P responsible for the 5' maturation of tRNA precursors. Preferentially binds precursor tRNAs containing short 5' leaders and 3' trailers. Also involved in the maturation of mRNA and small nucleolar RNA (snoRNA). In Arabidopsis thaliana (Mouse-ear cress), this protein is Proteinaceous RNase P 2 (PRORP2).